The chain runs to 626 residues: Threonine--tRNA ligase (626 aa).

An editing domain region spans residues 1-144 (MRMLLIHADY…LSRTIVPEEG (144 aa)). The interval 207-506 (PHVRLMLEHE…QAQGKKPMFP (300 aa)) is catalytic. Residues cysteine 299, histidine 351, and histidine 475 each coordinate Zn(2+).

Belongs to the class-II aminoacyl-tRNA synthetase family. Homodimer. Zn(2+) serves as cofactor.

It is found in the cytoplasm. It carries out the reaction tRNA(Thr) + L-threonine + ATP = L-threonyl-tRNA(Thr) + AMP + diphosphate + H(+). Catalyzes the attachment of threonine to tRNA(Thr) in a two-step reaction: L-threonine is first activated by ATP to form Thr-AMP and then transferred to the acceptor end of tRNA(Thr). Also edits incorrectly charged L-seryl-tRNA(Thr). This is Threonine--tRNA ligase from Thermococcus gammatolerans (strain DSM 15229 / JCM 11827 / EJ3).